The chain runs to 160 residues: Crossover junction endodeoxyribonuclease RuvC (160 aa).

Active-site residues include aspartate 7, glutamate 67, and aspartate 138. Positions 7, 67, and 138 each coordinate Mg(2+).

It belongs to the RuvC family. As to quaternary structure, homodimer which binds Holliday junction (HJ) DNA. The HJ becomes 2-fold symmetrical on binding to RuvC with unstacked arms; it has a different conformation from HJ DNA in complex with RuvA. In the full resolvosome a probable DNA-RuvA(4)-RuvB(12)-RuvC(2) complex forms which resolves the HJ. Mg(2+) serves as cofactor.

The protein resides in the cytoplasm. It carries out the reaction Endonucleolytic cleavage at a junction such as a reciprocal single-stranded crossover between two homologous DNA duplexes (Holliday junction).. Functionally, the RuvA-RuvB-RuvC complex processes Holliday junction (HJ) DNA during genetic recombination and DNA repair. Endonuclease that resolves HJ intermediates. Cleaves cruciform DNA by making single-stranded nicks across the HJ at symmetrical positions within the homologous arms, yielding a 5'-phosphate and a 3'-hydroxyl group; requires a central core of homology in the junction. The consensus cleavage sequence is 5'-(A/T)TT(C/G)-3'. Cleavage occurs on the 3'-side of the TT dinucleotide at the point of strand exchange. HJ branch migration catalyzed by RuvA-RuvB allows RuvC to scan DNA until it finds its consensus sequence, where it cleaves and resolves the cruciform DNA. This Brachyspira hyodysenteriae (strain ATCC 49526 / WA1) protein is Crossover junction endodeoxyribonuclease RuvC.